Here is a 423-residue protein sequence, read N- to C-terminus: Imidazolonepropionase (423 aa).

Fe(3+)-binding residues include H78 and H80. Residues H78 and H80 each contribute to the Zn(2+) site. The 4-imidazolone-5-propanoate site is built by R87, Y150, and H183. Y150 is a binding site for N-formimidoyl-L-glutamate. H247 contacts Fe(3+). A Zn(2+)-binding site is contributed by H247. Residue E250 coordinates 4-imidazolone-5-propanoate. D322 is a binding site for Fe(3+). D322 contributes to the Zn(2+) binding site. Residues N324 and G326 each contribute to the N-formimidoyl-L-glutamate site. Residue S327 participates in 4-imidazolone-5-propanoate binding.

Belongs to the metallo-dependent hydrolases superfamily. HutI family. Zn(2+) is required as a cofactor. The cofactor is Fe(3+).

It localises to the cytoplasm. The enzyme catalyses 4-imidazolone-5-propanoate + H2O = N-formimidoyl-L-glutamate. Its pathway is amino-acid degradation; L-histidine degradation into L-glutamate; N-formimidoyl-L-glutamate from L-histidine: step 3/3. In terms of biological role, catalyzes the hydrolytic cleavage of the carbon-nitrogen bond in imidazolone-5-propanoate to yield N-formimidoyl-L-glutamate. It is the third step in the universal histidine degradation pathway. The chain is Imidazolonepropionase from Bacillus cereus (strain G9842).